Consider the following 228-residue polypeptide: Lipoprotein-releasing system ATP-binding protein LolD (228 aa).

The ABC transporter domain maps to 6–228 (LRCKELSKSY…KNGILHKEQG (223 aa)). Position 42-49 (42-49 (GASGSGKS)) interacts with ATP.

The protein belongs to the ABC transporter superfamily. Lipoprotein translocase (TC 3.A.1.125) family. In terms of assembly, the complex is composed of two ATP-binding proteins (LolD) and two transmembrane proteins (LolC and LolE).

It localises to the cell inner membrane. Part of the ABC transporter complex LolCDE involved in the translocation of mature outer membrane-directed lipoproteins, from the inner membrane to the periplasmic chaperone, LolA. Responsible for the formation of the LolA-lipoprotein complex in an ATP-dependent manner. The polypeptide is Lipoprotein-releasing system ATP-binding protein LolD (Idiomarina loihiensis (strain ATCC BAA-735 / DSM 15497 / L2-TR)).